The following is a 403-amino-acid chain: Acetyl-CoA acetyltransferase IB (403 aa).

The active-site Acyl-thioester intermediate is the Cys-91. Active-site proton acceptor residues include His-353 and Cys-383. The Microbody targeting signal motif lies at 401–403 (AKL).

Belongs to the thiolase-like superfamily. Thiolase family. As to quaternary structure, multimeric.

It is found in the peroxisome. The enzyme catalyses 2 acetyl-CoA = acetoacetyl-CoA + CoA. It functions in the pathway metabolic intermediate biosynthesis; (R)-mevalonate biosynthesis; (R)-mevalonate from acetyl-CoA: step 1/3. The protein is Acetyl-CoA acetyltransferase IB (PACTB) of Candida tropicalis (Yeast).